The sequence spans 238 residues: Large ribosomal subunit protein uL1 (238 aa).

The protein belongs to the universal ribosomal protein uL1 family. Part of the 50S ribosomal subunit.

In terms of biological role, binds directly to 23S rRNA. The L1 stalk is quite mobile in the ribosome, and is involved in E site tRNA release. Protein L1 is also a translational repressor protein, it controls the translation of the L11 operon by binding to its mRNA. The polypeptide is Large ribosomal subunit protein uL1 (Gloeobacter violaceus (strain ATCC 29082 / PCC 7421)).